The following is a 203-amino-acid chain: FMN-dependent NADH:quinone oxidoreductase 1 (203 aa).

Residues serine 9, 15–17 (SAS), 95–98 (MYNF), and 139–142 (TAGG) each bind FMN.

This sequence belongs to the azoreductase type 1 family. As to quaternary structure, homodimer. FMN serves as cofactor.

It catalyses the reaction 2 a quinone + NADH + H(+) = 2 a 1,4-benzosemiquinone + NAD(+). The catalysed reaction is N,N-dimethyl-1,4-phenylenediamine + anthranilate + 2 NAD(+) = 2-(4-dimethylaminophenyl)diazenylbenzoate + 2 NADH + 2 H(+). Quinone reductase that provides resistance to thiol-specific stress caused by electrophilic quinones. In terms of biological role, also exhibits azoreductase activity. Catalyzes the reductive cleavage of the azo bond in aromatic azo compounds to the corresponding amines. This chain is FMN-dependent NADH:quinone oxidoreductase 1, found in Pseudomonas putida (strain ATCC 47054 / DSM 6125 / CFBP 8728 / NCIMB 11950 / KT2440).